Reading from the N-terminus, the 449-residue chain is Glucose-6-phosphate isomerase (449 aa).

The active-site Proton donor is the glutamate 291. Active-site residues include histidine 312 and lysine 426.

The protein belongs to the GPI family.

Its subcellular location is the cytoplasm. The catalysed reaction is alpha-D-glucose 6-phosphate = beta-D-fructose 6-phosphate. The protein operates within carbohydrate biosynthesis; gluconeogenesis. It participates in carbohydrate degradation; glycolysis; D-glyceraldehyde 3-phosphate and glycerone phosphate from D-glucose: step 2/4. In terms of biological role, catalyzes the reversible isomerization of glucose-6-phosphate to fructose-6-phosphate. This is Glucose-6-phosphate isomerase from Streptococcus pneumoniae serotype 19F (strain G54).